Reading from the N-terminus, the 487-residue chain is Gasdermin-D (487 aa).

Tyrosine 38 bears the Phosphotyrosine mark. An S-(2-succinyl)cysteine mark is found at cysteine 39, cysteine 57, and cysteine 77. The next 2 membrane-spanning stretches (beta stranded) occupy residues 92-98 and 104-109; these read QGRVMLS and KISGGA. An S-(2-succinyl)cysteine modification is found at cysteine 122. The next 2 beta stranded transmembrane spans lie at 181-187 and 192-198; these read GSGQFTL and CLKGEGK. 2 positions are modified to S-(2-succinyl)cysteine: cysteine 192 and cysteine 265. Cysteine 192 is lipidated: S-palmitoyl cysteine. The tract at residues 278–298 is linker helix loop; sequence IDEEELIEAADFQGLYAEVKA. Cysteine 299, cysteine 434, and cysteine 487 each carry S-(2-succinyl)cysteine.

The protein belongs to the gasdermin family. Homooligomer; homooligomeric ring-shaped pore complex containing 27-28 subunits when inserted in the membrane. Homooligomerization is promoted by the mTORC1 complex in macrophages. In response to a canonical inflammasome stimulus, such as nigericin, recruited to NLRP3 inflammasone with similar kinetics to that of uncleaved CASP1 precursor. Although this recruitment is also observed in the absence of PYCARD, it is more efficient in its presence. Post-translationally, cleavage at Asp-276 by CASP1 (mature and uncleaved precursor forms), CASP4/CASP11 or CASP8 relieves autoinhibition and is sufficient to initiate pyroptosis. Cleavage by CASP1 and CASP4/CASP11 is not strictly dependent on the consensus cleavage site on GSDMD but depends on an exosite interface on CASP1 that recognizes and binds the Gasdermin-D, C-terminal (GSDMD-CT) part. Cleavage by CASP8 takes place following inactivation of MAP3K7/TAK1 by Yersinia toxin YopJ. Cleavage at Asp-88 by CASP3 or CASP7 inactivates the ability to mediate pyroptosis, but generates the Gasdermin-D, p13 chain, which translocates to the nucleus and acts as a transcription regulator. Cleavage by papain allergen generates the Gasdermin-D, p40 chain. In terms of processing, palmitoylated at Cys-192 by ZDHHC5 and ZDHHC9 in response to microbial infection and danger signals. May also be palmitoylated by ZDHHC7. Palmitoylation takes place before cleavage by caspases (CASP1, CASP4, CASP5 or CASP8) and is required for membrane translocation and pore formation. Depalmitoylated by LYPLA2. Succination of Cys-192 by the Krebs cycle intermediate fumarate, which leads to S-(2-succinyl)cysteine residues, inhibits processing by caspases, and ability to initiate pyroptosis. Succination modification is catalyzed by a non-enzymatic reaction caused by an accumulation of fumarate. Post-translationally, glycosylated: O-GlcNAcylation by OGT leads to reduced cleavage by CASP4 and decreased LPS-induced endothelial cell pyroptosis. In terms of tissue distribution, highly expressed in brain endothelial cells.

The protein resides in the cytoplasm. It localises to the cytosol. It is found in the inflammasome. Its subcellular location is the cell membrane. The protein localises to the secreted. The protein resides in the mitochondrion membrane. It localises to the nucleus. The full-length protein before cleavage is inactive: intramolecular interactions between N- and C-terminal domains mediate autoinhibition in the absence of activation signal. The intrinsic pyroptosis-inducing activity is carried by the released N-terminal moiety (Gasdermin-D, N-terminal) following cleavage by inflammatory caspases CASP1, CASP4/CASP11 or CASP8. Cleavage at Asp-88 by CASP3 or CASP7 inactivates the ability to mediate pyroptosis. Pore formation is specifically inhibited by VHH(GSDMD-1) nanobody, protecting against excessive pyroptosis. Inhibited by small molecule NU6300, which covalently reacts with Cys-191, thereby preventing palmitoylation and pyroptosis. In terms of biological role, precursor of a pore-forming protein that plays a key role in host defense against pathogen infection and danger signals. This form constitutes the precursor of the pore-forming protein: upon cleavage, the released N-terminal moiety (Gasdermin-D, N-terminal) binds to membranes and forms pores, triggering pyroptosis. Functionally, promotes pyroptosis in response to microbial infection and danger signals. Produced by the cleavage of gasdermin-D by inflammatory caspases CASP1 or CASP4/CASP11 in response to canonical, as well as non-canonical (such as cytosolic LPS) inflammasome activators. After cleavage, moves to the plasma membrane where it strongly binds to inner leaflet lipids, including monophosphorylated phosphatidylinositols, such as phosphatidylinositol 4-phosphate, bisphosphorylated phosphatidylinositols, such as phosphatidylinositol (4,5)-bisphosphate, as well as phosphatidylinositol (3,4,5)-bisphosphate, and more weakly to phosphatidic acid and phosphatidylserine. Homooligomerizes within the membrane and forms pores of 10-15 nanometers (nm) of inner diameter, allowing the release of mature interleukin-1 (IL1B and IL18) and triggering pyroptosis. Gasdermin pores also allow the release of mature caspase-7 (CASP7). In some, but not all, cells types, pyroptosis is followed by pyroptotic cell death, which is caused by downstream activation of ninjurin-1 (NINJ1), which mediates membrane rupture (cytolysis). Also forms pores in the mitochondrial membrane, resulting in release of mitochondrial DNA (mtDNA) into the cytosol. Gasdermin-D, N-terminal released from pyroptotic cells into the extracellular milieu rapidly binds to and kills both Gram-negative and Gram-positive bacteria, without harming neighboring mammalian cells, as it does not disrupt the plasma membrane from the outside due to lipid-binding specificity. Under cell culture conditions, also active against intracellular bacteria, such as Listeria monocytogenes. Also active in response to MAP3K7/TAK1 inactivation by Yersinia toxin YopJ, which triggers cleavage by CASP8 and subsequent activation. Required for mucosal tissue defense against enteric pathogens. Activation of the non-canonical inflammasome in brain endothelial cells can lead to excessive pyroptosis, leading to blood-brain barrier breakdown. Strongly binds to bacterial and mitochondrial lipids, including cardiolipin. Does not bind to unphosphorylated phosphatidylinositol, phosphatidylethanolamine nor phosphatidylcholine. Its function is as follows. Transcription coactivator produced by the cleavage by CASP3 or CASP7 in the upper small intestine in response to dietary antigens. Required to maintain food tolerance in small intestine: translocates to the nucleus and acts as a coactivator for STAT1 to induce the transcription of CIITA and MHC class II molecules, which in turn induce type 1 regulatory T (Tr1) cells in upper small intestine. Produced by the cleavage by papain allergen. After cleavage, moves to the plasma membrane and homooligomerizes within the membrane and forms pores of 10-15 nanometers (nm) of inner diameter, allowing the specific release of mature interleukin-33 (IL33), promoting type 2 inflammatory immune response. The polypeptide is Gasdermin-D (Mus musculus (Mouse)).